A 263-amino-acid polypeptide reads, in one-letter code: Microtubule-associated protein RP/EB family member 1 (263 aa).

The Calponin-homology (CH) domain occupies 14-116 (NLSRHDMLAW…FVQWFKKFFD (103 aa)). The interval 150–182 (KPLGTGSAGPQRPIVAQRTPATPKGGTGMVKKA) is disordered. The EB1 C-terminal domain occupies 180 to 250 (KKAAGDDESA…LYATDEGFVI (71 aa)).

It belongs to the MAPRE family.

The protein localises to the cytoplasm. The protein resides in the cytoskeleton. Its subcellular location is the microtubule organizing center. It is found in the centrosome. It localises to the golgi apparatus. The protein localises to the spindle. The protein resides in the spindle pole. Plus-end tracking protein (+TIP) that binds to the plus-end of microtubules and regulates the dynamics of the microtubule cytoskeleton. Promotes cytoplasmic microtubule nucleation and elongation. Involved in mitotic spindle positioning by stabilizing microtubules and promoting dynamic connection between astral microtubules and the cortex during mitotic chromosome segregation. This is Microtubule-associated protein RP/EB family member 1 (MAPRE1) from Coturnix japonica (Japanese quail).